Here is a 44-residue protein sequence, read N- to C-terminus: Cytochrome b559 subunit beta (44 aa).

The helical transmembrane segment at 19-35 threads the bilayer; the sequence is WLAVHTLGVPTVFFLGA. H23 contributes to the heme binding site.

It belongs to the PsbE/PsbF family. Heterodimer of an alpha subunit and a beta subunit. PSII is composed of 1 copy each of membrane proteins PsbA, PsbB, PsbC, PsbD, PsbE, PsbF, PsbH, PsbI, PsbJ, PsbK, PsbL, PsbM, PsbT, PsbX, PsbY, PsbZ, Psb30/Ycf12, peripheral proteins PsbO, CyanoQ (PsbQ), PsbU, PsbV and a large number of cofactors. It forms dimeric complexes. Heme b is required as a cofactor.

Its subcellular location is the cellular thylakoid membrane. This b-type cytochrome is tightly associated with the reaction center of photosystem II (PSII). PSII is a light-driven water:plastoquinone oxidoreductase that uses light energy to abstract electrons from H(2)O, generating O(2) and a proton gradient subsequently used for ATP formation. It consists of a core antenna complex that captures photons, and an electron transfer chain that converts photonic excitation into a charge separation. In Trichodesmium erythraeum (strain IMS101), this protein is Cytochrome b559 subunit beta.